A 700-amino-acid chain; its full sequence is Acyl-coenzyme A oxidase 3 (700 aa).

Belongs to the acyl-CoA oxidase family. Heteropentamer composed of five different subunits. FAD serves as cofactor.

The protein localises to the peroxisome. It carries out the reaction a 2,3-saturated acyl-CoA + O2 = a (2E)-enoyl-CoA + H2O2. The protein operates within lipid metabolism; peroxisomal fatty acid beta-oxidation. Its function is as follows. Oxidizes aliphatic acyl-CoA substrates of different chain lengths such as hexanoyl-CoA, decanoyl-CoA and myristoyl-CoA as well as aromatic/heterocyclic ring-substituted chromogenic substrates, such as furylpropionyl-CoA. Of the above substrates, the efficiency of the enzyme, exhibits the following order: decanoyl-CoA &gt; myristoyl-CoA &gt; hexanoyl-CoA &gt; furyl-propionyl-CoA. This Yarrowia lipolytica (strain CLIB 122 / E 150) (Yeast) protein is Acyl-coenzyme A oxidase 3 (POX3).